Reading from the N-terminus, the 433-residue chain is Phosphomethylpyrimidine synthase 1 (433 aa).

Substrate is bound by residues Met95, Tyr124, His163, 185 to 187, 226 to 229, and Glu265; these read SRG and NAMR. His269 lines the Zn(2+) pocket. Residue Tyr292 participates in substrate binding. Position 333 (His333) interacts with Zn(2+). Residues Cys408, Cys411, and Cys415 each coordinate [4Fe-4S] cluster.

Belongs to the ThiC family. [4Fe-4S] cluster serves as cofactor.

The enzyme catalyses 5-amino-1-(5-phospho-beta-D-ribosyl)imidazole + S-adenosyl-L-methionine = 4-amino-2-methyl-5-(phosphooxymethyl)pyrimidine + CO + 5'-deoxyadenosine + formate + L-methionine + 3 H(+). The protein operates within cofactor biosynthesis; thiamine diphosphate biosynthesis. Catalyzes the synthesis of the hydroxymethylpyrimidine phosphate (HMP-P) moiety of thiamine from aminoimidazole ribotide (AIR) in a radical S-adenosyl-L-methionine (SAM)-dependent reaction. The sequence is that of Phosphomethylpyrimidine synthase 1 from Methanothermobacter thermautotrophicus (strain ATCC 29096 / DSM 1053 / JCM 10044 / NBRC 100330 / Delta H) (Methanobacterium thermoautotrophicum).